Consider the following 100-residue polypeptide: Biogenesis of lysosome-related organelles complex 1 subunit CNL1 (100 aa).

Residues 25 to 46 (SDRVKSLELEATRLVQRQNELV) adopt a coiled-coil conformation.

The protein belongs to the BLOC1S4 family. As to quaternary structure, component of the biogenesis of lysosome-related organelles complex-1 (BLOC-1).

It localises to the cytoplasm. Its function is as follows. Component of the biogenesis of lysosome-related organelles complex-1 (BLOC-1), a complex that is involved in endosomal cargo sorting. This Candida glabrata (strain ATCC 2001 / BCRC 20586 / JCM 3761 / NBRC 0622 / NRRL Y-65 / CBS 138) (Yeast) protein is Biogenesis of lysosome-related organelles complex 1 subunit CNL1 (CLN1).